We begin with the raw amino-acid sequence, 468 residues long: 5-carboxymethyl-2-hydroxymuconate semialdehyde dehydrogenase (468 aa).

The active site involves Glu244. Cys278 acts as the Nucleophile in catalysis.

The protein belongs to the aldehyde dehydrogenase family. As to quaternary structure, homodimer.

The enzyme catalyses 2-hydroxy-5-carboxymethylmuconate semialdehyde + NAD(+) + H2O = (2E,4Z)-5-hydroxypenta-2,4-diene-1,2,5-tricarboxylate + NADH + 2 H(+). Its pathway is aromatic compound metabolism; 4-hydroxyphenylacetate degradation; pyruvate and succinate semialdehyde from 4-hydroxyphenylacetate: step 3/7. Its function is as follows. Catalyzes the conversion of 5-carboxymethyl-2-hydroxy-muconic semialdehyde (CHMS) into 5-carboxymethyl-2-hydroxy-muconic acid (CHM or (2E,4Z)-5-hydroxypenta-2,4-diene-1,2,5-tricarboxylate). Is involved in a meta-cleavage pathway for the catabolism of 4-hydroxyphenylacetate (4-HPA) via homoprotocatechuate (HPC or 3,4-dihydroxyphenylacetate). This chain is 5-carboxymethyl-2-hydroxymuconate semialdehyde dehydrogenase, found in Escherichia coli.